Reading from the N-terminus, the 939-residue chain is Isoleucine--tRNA ligase (939 aa).

The 'HIGH' region motif lies at 58-68 (PYANGNIHIGH). Position 562 (Glu562) interacts with L-isoleucyl-5'-AMP. Positions 603–607 (KMSKS) match the 'KMSKS' region motif. Lys606 lines the ATP pocket. Zn(2+)-binding residues include Cys903, Cys906, Cys922, and Cys925.

It belongs to the class-I aminoacyl-tRNA synthetase family. IleS type 1 subfamily. As to quaternary structure, monomer. The cofactor is Zn(2+).

The protein localises to the cytoplasm. The catalysed reaction is tRNA(Ile) + L-isoleucine + ATP = L-isoleucyl-tRNA(Ile) + AMP + diphosphate. Functionally, catalyzes the attachment of isoleucine to tRNA(Ile). As IleRS can inadvertently accommodate and process structurally similar amino acids such as valine, to avoid such errors it has two additional distinct tRNA(Ile)-dependent editing activities. One activity is designated as 'pretransfer' editing and involves the hydrolysis of activated Val-AMP. The other activity is designated 'posttransfer' editing and involves deacylation of mischarged Val-tRNA(Ile). In Buchnera aphidicola subsp. Baizongia pistaciae (strain Bp), this protein is Isoleucine--tRNA ligase.